We begin with the raw amino-acid sequence, 454 residues long: CCA-adding enzyme (454 aa).

Residues Ser51 and Lys54 each contribute to the ATP site. Positions 51 and 54 each coordinate CTP. Mg(2+) is bound by residues Asp63, Asp65, and Asp118. ATP-binding residues include His141, Lys161, and Tyr170. CTP is bound by residues His141, Lys161, and Tyr170.

This sequence belongs to the tRNA nucleotidyltransferase/poly(A) polymerase family. Archaeal CCA-adding enzyme subfamily. Homodimer. It depends on Mg(2+) as a cofactor.

It catalyses the reaction a tRNA precursor + 2 CTP + ATP = a tRNA with a 3' CCA end + 3 diphosphate. The enzyme catalyses a tRNA with a 3' CCA end + 2 CTP + ATP = a tRNA with a 3' CCACCA end + 3 diphosphate. Functionally, catalyzes the addition and repair of the essential 3'-terminal CCA sequence in tRNAs without using a nucleic acid template. Adds these three nucleotides in the order of C, C, and A to the tRNA nucleotide-73, using CTP and ATP as substrates and producing inorganic pyrophosphate. tRNA 3'-terminal CCA addition is required both for tRNA processing and repair. Also involved in tRNA surveillance by mediating tandem CCA addition to generate a CCACCA at the 3' terminus of unstable tRNAs. While stable tRNAs receive only 3'-terminal CCA, unstable tRNAs are marked with CCACCA and rapidly degraded. The chain is CCA-adding enzyme from Methanothermobacter thermautotrophicus (strain ATCC 29096 / DSM 1053 / JCM 10044 / NBRC 100330 / Delta H) (Methanobacterium thermoautotrophicum).